A 510-amino-acid polypeptide reads, in one-letter code: NAD(P)H-quinone oxidoreductase subunit 2 B, chloroplastic (510 aa).

12 consecutive transmembrane segments (helical) span residues 24-44, 59-79, 99-119, 124-144, 149-169, 183-203, 229-249, 295-315, 323-343, 354-374, 395-415, and 418-438; these read LLLF…GLIL, WFYF…LFRW, IFQF…VEYI, MAIT…MFLC, LITI…LSGY, YLLM…WLYG, ISIA…PAPF, WHLL…LLAI, MLAY…IVGD, YMLF…LFGL, ALSL…AGFF, and LYLF…IGLL.

This sequence belongs to the complex I subunit 2 family. NDH is composed of at least 16 different subunits, 5 of which are encoded in the nucleus.

It is found in the plastid. Its subcellular location is the chloroplast thylakoid membrane. It carries out the reaction a plastoquinone + NADH + (n+1) H(+)(in) = a plastoquinol + NAD(+) + n H(+)(out). The catalysed reaction is a plastoquinone + NADPH + (n+1) H(+)(in) = a plastoquinol + NADP(+) + n H(+)(out). Functionally, NDH shuttles electrons from NAD(P)H:plastoquinone, via FMN and iron-sulfur (Fe-S) centers, to quinones in the photosynthetic chain and possibly in a chloroplast respiratory chain. The immediate electron acceptor for the enzyme in this species is believed to be plastoquinone. Couples the redox reaction to proton translocation, and thus conserves the redox energy in a proton gradient. This chain is NAD(P)H-quinone oxidoreductase subunit 2 B, chloroplastic, found in Lolium perenne (Perennial ryegrass).